Reading from the N-terminus, the 434-residue chain is Ribosomal protein uS12 methylthiotransferase RimO (434 aa).

An MTTase N-terminal domain is found at 6–122; that stretch reads SKLYLLTLGC…IIAELGGHYK (117 aa). Residues Cys-15, Cys-51, Cys-85, Cys-146, Cys-150, and Cys-153 each contribute to the [4Fe-4S] cluster site. The Radical SAM core domain maps to 132–361; it reads LTPPYFSYLK…MAAQEEIAYA (230 aa). Residues 364–434 form the TRAM domain; it reads QALVGSFMPV…AFDLFGSLVL (71 aa).

The protein belongs to the methylthiotransferase family. RimO subfamily. [4Fe-4S] cluster serves as cofactor.

The protein localises to the cytoplasm. It catalyses the reaction L-aspartate(89)-[ribosomal protein uS12]-hydrogen + (sulfur carrier)-SH + AH2 + 2 S-adenosyl-L-methionine = 3-methylsulfanyl-L-aspartate(89)-[ribosomal protein uS12]-hydrogen + (sulfur carrier)-H + 5'-deoxyadenosine + L-methionine + A + S-adenosyl-L-homocysteine + 2 H(+). Its function is as follows. Catalyzes the methylthiolation of an aspartic acid residue of ribosomal protein uS12. In Chloroherpeton thalassium (strain ATCC 35110 / GB-78), this protein is Ribosomal protein uS12 methylthiotransferase RimO.